We begin with the raw amino-acid sequence, 882 residues long: Alanine--tRNA ligase (882 aa).

4 residues coordinate Zn(2+): histidine 570, histidine 574, cysteine 672, and histidine 676.

The protein belongs to the class-II aminoacyl-tRNA synthetase family. The cofactor is Zn(2+).

The protein resides in the cytoplasm. It catalyses the reaction tRNA(Ala) + L-alanine + ATP = L-alanyl-tRNA(Ala) + AMP + diphosphate. Functionally, catalyzes the attachment of alanine to tRNA(Ala) in a two-step reaction: alanine is first activated by ATP to form Ala-AMP and then transferred to the acceptor end of tRNA(Ala). Also edits incorrectly charged Ser-tRNA(Ala) and Gly-tRNA(Ala) via its editing domain. In Xanthomonas oryzae pv. oryzae (strain MAFF 311018), this protein is Alanine--tRNA ligase.